The sequence spans 185 residues: Elongation factor P (185 aa).

It belongs to the elongation factor P family.

It localises to the cytoplasm. The protein operates within protein biosynthesis; polypeptide chain elongation. Its function is as follows. Involved in peptide bond synthesis. Stimulates efficient translation and peptide-bond synthesis on native or reconstituted 70S ribosomes in vitro. Probably functions indirectly by altering the affinity of the ribosome for aminoacyl-tRNA, thus increasing their reactivity as acceptors for peptidyl transferase. The protein is Elongation factor P of Cyanothece sp. (strain PCC 7425 / ATCC 29141).